The sequence spans 80 residues: Defensin-like protein 14 (80 aa).

Positions 1 to 29 (MAKSAAIITFLFAALVLFAAFEAPIMVEA) are cleaved as a signal peptide. Residue glutamine 30 is modified to Pyrrolidone carboxylic acid. Intrachain disulfides connect cysteine 33-cysteine 80, cysteine 44-cysteine 65, cysteine 50-cysteine 74, and cysteine 54-cysteine 76.

This sequence belongs to the DEFL family.

It is found in the secreted. In terms of biological role, confers broad-spectrum resistance to pathogens. Has antifungal activity in vitro. This is Defensin-like protein 14 (PDF1.3) from Arabidopsis thaliana (Mouse-ear cress).